The chain runs to 353 residues: Phosphate acyltransferase (353 aa).

The protein belongs to the PlsX family. Homodimer. Probably interacts with PlsY.

The protein localises to the cytoplasm. It carries out the reaction a fatty acyl-[ACP] + phosphate = an acyl phosphate + holo-[ACP]. Its pathway is lipid metabolism; phospholipid metabolism. Catalyzes the reversible formation of acyl-phosphate (acyl-PO(4)) from acyl-[acyl-carrier-protein] (acyl-ACP). This enzyme utilizes acyl-ACP as fatty acyl donor, but not acyl-CoA. The sequence is that of Phosphate acyltransferase from Ralstonia pickettii (strain 12J).